A 180-amino-acid polypeptide reads, in one-letter code: NADH-quinone oxidoreductase subunit I (180 aa).

2 4Fe-4S ferredoxin-type domains span residues 48–80 (IVLTRDPDGDERCVACNLCAVACPVGCISLQKS) and 90–119 (EFFRINFSRCIFCGLCEEACPTTAIQLTPD). [4Fe-4S] cluster is bound by residues cysteine 60, cysteine 63, cysteine 66, cysteine 70, cysteine 99, cysteine 102, cysteine 105, and cysteine 109. Over residues 161 to 174 (KPKGDAENEAKPID) the composition is skewed to basic and acidic residues. The interval 161–180 (KPKGDAENEAKPIDVKSLLP) is disordered.

The protein belongs to the complex I 23 kDa subunit family. NDH-1 is composed of 14 different subunits. Subunits NuoA, H, J, K, L, M, N constitute the membrane sector of the complex. Requires [4Fe-4S] cluster as cofactor.

The protein resides in the cell inner membrane. It catalyses the reaction a quinone + NADH + 5 H(+)(in) = a quinol + NAD(+) + 4 H(+)(out). In terms of biological role, NDH-1 shuttles electrons from NADH, via FMN and iron-sulfur (Fe-S) centers, to quinones in the respiratory chain. The immediate electron acceptor for the enzyme in this species is believed to be ubiquinone. Couples the redox reaction to proton translocation (for every two electrons transferred, four hydrogen ions are translocated across the cytoplasmic membrane), and thus conserves the redox energy in a proton gradient. The chain is NADH-quinone oxidoreductase subunit I from Aeromonas hydrophila subsp. hydrophila (strain ATCC 7966 / DSM 30187 / BCRC 13018 / CCUG 14551 / JCM 1027 / KCTC 2358 / NCIMB 9240 / NCTC 8049).